Consider the following 230-residue polypeptide: Enolase-phosphatase E1 (230 aa).

The protein belongs to the HAD-like hydrolase superfamily. MasA/MtnC family. Monomer. Mg(2+) serves as cofactor.

The catalysed reaction is 5-methylsulfanyl-2,3-dioxopentyl phosphate + H2O = 1,2-dihydroxy-5-(methylsulfanyl)pent-1-en-3-one + phosphate. It functions in the pathway amino-acid biosynthesis; L-methionine biosynthesis via salvage pathway; L-methionine from S-methyl-5-thio-alpha-D-ribose 1-phosphate: step 3/6. The protein operates within amino-acid biosynthesis; L-methionine biosynthesis via salvage pathway; L-methionine from S-methyl-5-thio-alpha-D-ribose 1-phosphate: step 4/6. Its function is as follows. Bifunctional enzyme that catalyzes the enolization of 2,3-diketo-5-methylthiopentyl-1-phosphate (DK-MTP-1-P) into the intermediate 2-hydroxy-3-keto-5-methylthiopentenyl-1-phosphate (HK-MTPenyl-1-P), which is then dephosphorylated to form the acireductone 1,2-dihydroxy-3-keto-5-methylthiopentene (DHK-MTPene). In Bradyrhizobium sp. (strain BTAi1 / ATCC BAA-1182), this protein is Enolase-phosphatase E1.